The following is a 273-amino-acid chain: Dermonecrotic toxin LapSicTox-alphaIB1aiv (273 aa).

The active site involves histidine 5. Mg(2+)-binding residues include glutamate 25 and aspartate 27. Catalysis depends on histidine 41, which acts as the Nucleophile. 2 cysteine pairs are disulfide-bonded: cysteine 45-cysteine 51 and cysteine 47-cysteine 190. Aspartate 85 provides a ligand contact to Mg(2+). N-linked (GlcNAc...) asparagine glycosylation occurs at asparagine 250.

It belongs to the arthropod phospholipase D family. Class II subfamily. Requires Mg(2+) as cofactor. In terms of tissue distribution, expressed by the venom gland.

The protein resides in the secreted. It carries out the reaction an N-(acyl)-sphingosylphosphocholine = an N-(acyl)-sphingosyl-1,3-cyclic phosphate + choline. The enzyme catalyses an N-(acyl)-sphingosylphosphoethanolamine = an N-(acyl)-sphingosyl-1,3-cyclic phosphate + ethanolamine. The catalysed reaction is a 1-acyl-sn-glycero-3-phosphocholine = a 1-acyl-sn-glycero-2,3-cyclic phosphate + choline. It catalyses the reaction a 1-acyl-sn-glycero-3-phosphoethanolamine = a 1-acyl-sn-glycero-2,3-cyclic phosphate + ethanolamine. Functionally, dermonecrotic toxins cleave the phosphodiester linkage between the phosphate and headgroup of certain phospholipids (sphingolipid and lysolipid substrates), forming an alcohol (often choline) and a cyclic phosphate. This toxin acts on sphingomyelin (SM). It may also act on ceramide phosphoethanolamine (CPE), lysophosphatidylcholine (LPC) and lysophosphatidylethanolamine (LPE), but not on lysophosphatidylserine (LPS), and lysophosphatidylglycerol (LPG). It acts by transphosphatidylation, releasing exclusively cyclic phosphate products as second products. Induces dermonecrosis, hemolysis, increased vascular permeability, edema, inflammatory response, and platelet aggregation. The sequence is that of Dermonecrotic toxin LapSicTox-alphaIB1aiv from Loxosceles apachea (Apache recluse spider).